We begin with the raw amino-acid sequence, 345 residues long: Protoheme IX farnesyltransferase (345 aa).

Transmembrane regions (helical) follow at residues 33-53, 54-74, 105-125, 126-146, 154-174, 182-202, 226-246, 247-267, and 315-335; these read VMSL…TPIH, PLLG…SGAL, ATLG…AINW, LAAG…TMWL, IVIG…AATG, LMVL…SLYI, QILL…FTGL, GGWL…TLAV, and ILYL…GLPI.

The protein belongs to the UbiA prenyltransferase family. Protoheme IX farnesyltransferase subfamily.

The protein localises to the cell inner membrane. It catalyses the reaction heme b + (2E,6E)-farnesyl diphosphate + H2O = Fe(II)-heme o + diphosphate. Its pathway is porphyrin-containing compound metabolism; heme O biosynthesis; heme O from protoheme: step 1/1. In terms of biological role, converts heme B (protoheme IX) to heme O by substitution of the vinyl group on carbon 2 of heme B porphyrin ring with a hydroxyethyl farnesyl side group. The sequence is that of Protoheme IX farnesyltransferase from Caulobacter sp. (strain K31).